Reading from the N-terminus, the 388-residue chain is Succinate--CoA ligase [ADP-forming] subunit beta (388 aa).

Residues Lys-46, 53 to 55 (GRG), Glu-99, Cys-102, and Glu-107 contribute to the ATP site. Mg(2+) is bound by residues Asn-199 and Asp-213. Residues Asn-264 and 321 to 323 (GIV) contribute to the substrate site.

Belongs to the succinate/malate CoA ligase beta subunit family. Heterotetramer of two alpha and two beta subunits. It depends on Mg(2+) as a cofactor.

It catalyses the reaction succinate + ATP + CoA = succinyl-CoA + ADP + phosphate. The catalysed reaction is GTP + succinate + CoA = succinyl-CoA + GDP + phosphate. Its pathway is carbohydrate metabolism; tricarboxylic acid cycle; succinate from succinyl-CoA (ligase route): step 1/1. Functionally, succinyl-CoA synthetase functions in the citric acid cycle (TCA), coupling the hydrolysis of succinyl-CoA to the synthesis of either ATP or GTP and thus represents the only step of substrate-level phosphorylation in the TCA. The beta subunit provides nucleotide specificity of the enzyme and binds the substrate succinate, while the binding sites for coenzyme A and phosphate are found in the alpha subunit. The chain is Succinate--CoA ligase [ADP-forming] subunit beta from Actinobacillus pleuropneumoniae serotype 3 (strain JL03).